The sequence spans 516 residues: Nuclear speckle splicing regulatory protein 1 (516 aa).

Disordered regions lie at residues 1-43 (MATS…GESL), 111-137 (ERKK…KFAD), 151-170 (KERQ…EAAL), and 188-494 (QTVG…SSAR). Ser33 bears the Phosphoserine mark. The stretch at 100 to 176 (KYINQLLRAV…EAALDVKKQK (77 aa)) forms a coiled coil. The segment covering 207–221 (TSSAAAERSPSPEST) has biased composition (low complexity). Composition is skewed to basic and acidic residues over residues 222 to 239 (ANRR…DQVD) and 271 to 466 (ERER…KLVE). Positions 358-401 (KGERDRRDNSPKDRERDRKGERDRRDNSPKDRERETRDKSPKDR) form a coiled coil.

The protein belongs to the NSRP1 family.

This is Nuclear speckle splicing regulatory protein 1 (nsrp1) from Danio rerio (Zebrafish).